Here is a 269-residue protein sequence, read N- to C-terminus: Formamidopyrimidine-DNA glycosylase (269 aa).

P2 functions as the Schiff-base intermediate with DNA in the catalytic mechanism. The active-site Proton donor is E3. The active-site Proton donor; for beta-elimination activity is the K57. 3 residues coordinate DNA: H90, R109, and R150. The FPG-type zinc-finger motif lies at 235–269; it reads QVYGRKGEPCRVCGTPVVATKHAQRATFYCRHCQK. R259 functions as the Proton donor; for delta-elimination activity in the catalytic mechanism.

Belongs to the FPG family. In terms of assembly, monomer. The cofactor is Zn(2+).

It carries out the reaction Hydrolysis of DNA containing ring-opened 7-methylguanine residues, releasing 2,6-diamino-4-hydroxy-5-(N-methyl)formamidopyrimidine.. It catalyses the reaction 2'-deoxyribonucleotide-(2'-deoxyribose 5'-phosphate)-2'-deoxyribonucleotide-DNA = a 3'-end 2'-deoxyribonucleotide-(2,3-dehydro-2,3-deoxyribose 5'-phosphate)-DNA + a 5'-end 5'-phospho-2'-deoxyribonucleoside-DNA + H(+). Involved in base excision repair of DNA damaged by oxidation or by mutagenic agents. Acts as a DNA glycosylase that recognizes and removes damaged bases. Has a preference for oxidized purines, such as 7,8-dihydro-8-oxoguanine (8-oxoG). Has AP (apurinic/apyrimidinic) lyase activity and introduces nicks in the DNA strand. Cleaves the DNA backbone by beta-delta elimination to generate a single-strand break at the site of the removed base with both 3'- and 5'-phosphates. This chain is Formamidopyrimidine-DNA glycosylase, found in Salmonella arizonae (strain ATCC BAA-731 / CDC346-86 / RSK2980).